We begin with the raw amino-acid sequence, 73 residues long: Gas vesicle protein A (73 aa).

Belongs to the gas vesicle GvpA family. In terms of assembly, the gas vesicle shell is 2 nm thick and consists of a single layer of this protein. It forms helical ribs nearly perpendicular to the long axis of the vesicle.

The protein resides in the gas vesicle shell. Functionally, gas vesicles are hollow, gas filled proteinaceous nanostructures found in some microorganisms. During planktonic growth they allow positioning of the organism at a favorable depth for light or nutrient acquisition. GvpA forms the protein shell. The polypeptide is Gas vesicle protein A (Nostoc punctiforme (strain ATCC 29133 / PCC 73102)).